Consider the following 475-residue polypeptide: Ribulose bisphosphate carboxylase large chain (475 aa).

Positions 1–2 (MA) are excised as a propeptide. Position 3 is an N-acetylproline (P3). K14 carries the post-translational modification N6,N6,N6-trimethyllysine. N123 and T173 together coordinate substrate. The Proton acceptor role is filled by K175. Residue K177 coordinates substrate. The Mg(2+) site is built by K201, D203, and E204. The residue at position 201 (K201) is an N6-carboxylysine. The active-site Proton acceptor is H294. Residues R295, H327, and S379 each coordinate substrate.

Belongs to the RuBisCO large chain family. Type I subfamily. Heterohexadecamer of 8 large chains and 8 small chains; disulfide-linked. The disulfide link is formed within the large subunit homodimers. The cofactor is Mg(2+). Post-translationally, the disulfide bond which can form in the large chain dimeric partners within the hexadecamer appears to be associated with oxidative stress and protein turnover.

It localises to the plastid. It is found in the chloroplast. It carries out the reaction 2 (2R)-3-phosphoglycerate + 2 H(+) = D-ribulose 1,5-bisphosphate + CO2 + H2O. It catalyses the reaction D-ribulose 1,5-bisphosphate + O2 = 2-phosphoglycolate + (2R)-3-phosphoglycerate + 2 H(+). In terms of biological role, ruBisCO catalyzes two reactions: the carboxylation of D-ribulose 1,5-bisphosphate, the primary event in carbon dioxide fixation, as well as the oxidative fragmentation of the pentose substrate in the photorespiration process. Both reactions occur simultaneously and in competition at the same active site. This is Ribulose bisphosphate carboxylase large chain from Bryopsis maxima (Green alga).